We begin with the raw amino-acid sequence, 252 residues long: Carboxymethylenebutenolidase (252 aa).

The interval 1–28 (MCHNKSSAPPTPAHISIQQNRTPGTDPV) is disordered. Catalysis depends on residues Cys-126, Asp-183, and His-214.

The protein belongs to the dienelactone hydrolase family.

It carries out the reaction 2-(5-oxo-2,5-dihydrofuran-2-ylidene)acetate + H2O = 4-oxohex-2-enedioate + H(+). Its pathway is aromatic compound metabolism; 3-chlorocatechol degradation. Its function is as follows. Ring cleavage of cyclic ester dienelactone to produce maleylacetate. The protein is Carboxymethylenebutenolidase (clcD) of Rhodococcus opacus (Nocardia opaca).